Here is a 439-residue protein sequence, read N- to C-terminus: Xylose isomerase (439 aa).

Catalysis depends on residues His101 and Asp104. Mg(2+)-binding residues include Glu232, Glu268, His271, Asp296, Asp307, Asp309, and Asp339.

Belongs to the xylose isomerase family. In terms of assembly, homotetramer. Requires Mg(2+) as cofactor.

It is found in the cytoplasm. It catalyses the reaction alpha-D-xylose = alpha-D-xylulofuranose. This is Xylose isomerase from Marinomonas sp. (strain MWYL1).